A 191-amino-acid chain; its full sequence is Cytochrome c biogenesis ATP-binding export protein CcmA (191 aa).

Positions 2–190 (LSLHQLQFKN…SIKSAQILRI (189 aa)) constitute an ABC transporter domain. Residue 29 to 36 (GANGCGKS) participates in ATP binding.

Belongs to the ABC transporter superfamily. CcmA exporter (TC 3.A.1.107) family. The complex is composed of two ATP-binding proteins (CcmA) and two transmembrane proteins (CcmB).

It localises to the cell inner membrane. The catalysed reaction is heme b(in) + ATP + H2O = heme b(out) + ADP + phosphate + H(+). Part of the ABC transporter complex CcmAB involved in the biogenesis of c-type cytochromes; once thought to export heme, this seems not to be the case, but its exact role is uncertain. Responsible for energy coupling to the transport system. This Rickettsia conorii (strain ATCC VR-613 / Malish 7) protein is Cytochrome c biogenesis ATP-binding export protein CcmA.